The chain runs to 890 residues: Translation initiation factor IF-2 (890 aa).

Residues 45-304 (LIDHLNQKNS…LQQGFQKPAQ (260 aa)) form a disordered region. The segment covering 67–81 (STLNIPGTGGKSKSV) has biased composition (polar residues). A compositionally biased stretch (basic and acidic residues) spans 92–217 (VKRDPQEAER…RMAEENKWTD (126 aa)). A compositionally biased stretch (basic residues) spans 252 to 266 (GRGRNAKAARPKKGN). Over residues 267 to 280 (KHAESKADREEARA) the composition is skewed to basic and acidic residues. One can recognise a tr-type G domain in the interval 389–558 (PRAPVVTIMG…LLQAEVLELK (170 aa)). Residues 398-405 (GHVDHGKT) are G1. Residue 398 to 405 (GHVDHGKT) coordinates GTP. Residues 423 to 427 (GITQH) form a G2 region. Residues 444–447 (DTPG) are G3. GTP-binding positions include 444-448 (DTPGH) and 498-501 (NKID). The segment at 498–501 (NKID) is G4. The interval 534-536 (SAK) is G5. K808 carries the post-translational modification N6-acetyllysine.

This sequence belongs to the TRAFAC class translation factor GTPase superfamily. Classic translation factor GTPase family. IF-2 subfamily.

It localises to the cytoplasm. In terms of biological role, one of the essential components for the initiation of protein synthesis. Protects formylmethionyl-tRNA from spontaneous hydrolysis and promotes its binding to the 30S ribosomal subunits. Also involved in the hydrolysis of GTP during the formation of the 70S ribosomal complex. This Shigella sonnei (strain Ss046) protein is Translation initiation factor IF-2.